A 489-amino-acid polypeptide reads, in one-letter code: Glucose-6-phosphate isomerase (489 aa).

The active-site Proton donor is the Glu309. Active-site residues include His340 and Lys459.

Belongs to the GPI family.

The protein localises to the cytoplasm. It carries out the reaction alpha-D-glucose 6-phosphate = beta-D-fructose 6-phosphate. It participates in carbohydrate biosynthesis; gluconeogenesis. The protein operates within carbohydrate degradation; glycolysis; D-glyceraldehyde 3-phosphate and glycerone phosphate from D-glucose: step 2/4. Catalyzes the reversible isomerization of glucose-6-phosphate to fructose-6-phosphate. This Idiomarina loihiensis (strain ATCC BAA-735 / DSM 15497 / L2-TR) protein is Glucose-6-phosphate isomerase.